The following is an 83-amino-acid chain: MKTLLLTLVVVTIVCLDLGYTRRCFNHPSSQPQTNKSCPPGENSCYNKQWRDHRGTITERGCGCPTVKPGIKLTCCQSEDCNN.

The N-terminal stretch at 1-21 (MKTLLLTLVVVTIVCLDLGYT) is a signal peptide. 4 cysteine pairs are disulfide-bonded: C24-C45, C38-C62, C64-C75, and C76-C81.

It belongs to the three-finger toxin family. Short-chain subfamily. Type I alpha-neurotoxin sub-subfamily. Expressed by the venom gland.

The protein resides in the secreted. Binds to muscle nicotinic acetylcholine receptor (nAChR) and inhibit acetylcholine from binding to the receptor, thereby impairing neuromuscular transmission. The polypeptide is Short neurotoxin OKI-01/OKI-19 (Laticauda laticaudata (Blue-ringed sea krait)).